The chain runs to 408 residues: Argininosuccinate synthase (408 aa).

Residues 10 to 18 (AYSGGLDTS) and A37 each bind ATP. The L-citrulline site is built by Y90 and S95. ATP is bound at residue G120. Residues T122, N126, and D127 each coordinate L-aspartate. N126 contacts L-citrulline. L-citrulline contacts are provided by R130, S181, S190, E266, and Y278.

This sequence belongs to the argininosuccinate synthase family. Type 1 subfamily. As to quaternary structure, homotetramer.

The protein localises to the cytoplasm. It carries out the reaction L-citrulline + L-aspartate + ATP = 2-(N(omega)-L-arginino)succinate + AMP + diphosphate + H(+). Its pathway is amino-acid biosynthesis; L-arginine biosynthesis; L-arginine from L-ornithine and carbamoyl phosphate: step 2/3. This Chromobacterium violaceum (strain ATCC 12472 / DSM 30191 / JCM 1249 / CCUG 213 / NBRC 12614 / NCIMB 9131 / NCTC 9757 / MK) protein is Argininosuccinate synthase.